Consider the following 675-residue polypeptide: Calcium channel YVC1 (675 aa).

Topologically, residues 1–236 (MVSANGDLHL…PVRLKAPVYQ (236 aa)) are cytoplasmic. The chain crosses the membrane as a helical span at residues 237–257 (NYLQMIFSFLFLGLYTLVVNG). The Vacuolar portion of the chain corresponds to 258–295 (KDSERVQSFDLLESIFYVFNTGFILDELTKLYYIGYAH). Residues 296-316 (LSFWNLFNDTTYLIITFAMGF) traverse the membrane as a helical segment. Residues 317–335 (RAMSVTPLNAKYSSEDWDK) are Cytoplasmic-facing. Residues 336-355 (ISYRVLSCAAPFVWSRLLLY) traverse the membrane as a helical segment. The Vacuolar portion of the chain corresponds to 356-376 (LESQRFIGIMLVILKHMMKES). Residues 377-397 (IVFFFLLFLIMIGFTQGFLGL) traverse the membrane as a helical segment. The Cytoplasmic portion of the chain corresponds to 398–405 (DSADGKRD). The chain crosses the membrane as a helical span at residues 406–426 (ITGPILGNLTITVLGLGSFDV). Residues 427–436 (FEEFAPPYAA) lie on the Vacuolar side of the membrane. Residues 437-457 (ILYYGYYFIVSVILLNILIAL) traverse the membrane as a helical segment. Topologically, residues 458–675 (YSTAYQKVID…EKLDIKDKKE (218 aa)) are cytoplasmic. The residue at position 636 (T636) is a Phosphothreonine.

This sequence belongs to the transient receptor (TC 1.A.4) family.

The protein localises to the vacuole membrane. Required for release of calcium ions from the vacuole in response to hyperosmotic shock. The chain is Calcium channel YVC1 from Saccharomyces cerevisiae (strain ATCC 204508 / S288c) (Baker's yeast).